Here is a 395-residue protein sequence, read N- to C-terminus: Nuclear hormone receptor family member nhr-10 (395 aa).

Residues 15–90 (EEVCLVCSDI…VGMDRNAIQQ (76 aa)) constitute a DNA-binding region (nuclear receptor). 2 NR C4-type zinc fingers span residues 18 to 38 (CLVC…CNGC) and 54 to 78 (CQFQ…FEKC). In terms of domain architecture, NR LBD spans 152-392 (PSRTLIEAVV…TFAKQLLFGI (241 aa)).

Belongs to the nuclear hormone receptor family.

It localises to the nucleus. In terms of biological role, probable transcription factor that acts in a feed-forward loop with nhr-68 to activate genes involved in the vitamin B12-independent breakdown of the short-chain fatty acid propionate. This pathway is triggered in response to a diet low in vitamin B12, when canonical vitamin B12-dependent propionate breakdown cannot function; the resulting accumulation of propionate is probably sensed by nhr-10 and/or nhr-68. In Caenorhabditis elegans, this protein is Nuclear hormone receptor family member nhr-10 (nhr-10).